Here is a 557-residue protein sequence, read N- to C-terminus: Urocanate hydratase (557 aa).

Residues 52-53 (GG), Gln130, 176-178 (GMG), Glu196, Arg201, 242-243 (NA), 263-267 (QTSAH), 273-274 (YL), and Tyr322 each bind NAD(+). Residue Cys410 is part of the active site. Residue Gly492 participates in NAD(+) binding.

The protein belongs to the urocanase family. The cofactor is NAD(+).

It is found in the cytoplasm. The catalysed reaction is 4-imidazolone-5-propanoate = trans-urocanate + H2O. The protein operates within amino-acid degradation; L-histidine degradation into L-glutamate; N-formimidoyl-L-glutamate from L-histidine: step 2/3. In terms of biological role, catalyzes the conversion of urocanate to 4-imidazolone-5-propionate. The protein is Urocanate hydratase of Allorhizobium ampelinum (strain ATCC BAA-846 / DSM 112012 / S4) (Agrobacterium vitis (strain S4)).